Consider the following 82-residue polypeptide: Small ribosomal subunit protein bS16 (82 aa).

This sequence belongs to the bacterial ribosomal protein bS16 family.

The chain is Small ribosomal subunit protein bS16 from Clostridium botulinum (strain ATCC 19397 / Type A).